Consider the following 132-residue polypeptide: Small ribosomal subunit protein uS8 (132 aa).

Belongs to the universal ribosomal protein uS8 family. As to quaternary structure, part of the 30S ribosomal subunit. Contacts proteins S5 and S12.

Functionally, one of the primary rRNA binding proteins, it binds directly to 16S rRNA central domain where it helps coordinate assembly of the platform of the 30S subunit. This is Small ribosomal subunit protein uS8 from Macrococcus caseolyticus (strain JCSC5402) (Macrococcoides caseolyticum).